The following is a 172-amino-acid chain: uncharacterized protein (172 aa).

Residues 22-64 (RSVSSSPAAKQPAPGTVAQSFPPGELALRDETGGRGRGTRGIR) form a disordered region.

This is an uncharacterized protein from Human cytomegalovirus (strain AD169) (HHV-5).